A 191-amino-acid polypeptide reads, in one-letter code: Leucyl/phenylalanyl-tRNA--protein transferase (191 aa).

Belongs to the L/F-transferase family.

The protein localises to the cytoplasm. It carries out the reaction N-terminal L-lysyl-[protein] + L-leucyl-tRNA(Leu) = N-terminal L-leucyl-L-lysyl-[protein] + tRNA(Leu) + H(+). The catalysed reaction is N-terminal L-arginyl-[protein] + L-leucyl-tRNA(Leu) = N-terminal L-leucyl-L-arginyl-[protein] + tRNA(Leu) + H(+). The enzyme catalyses L-phenylalanyl-tRNA(Phe) + an N-terminal L-alpha-aminoacyl-[protein] = an N-terminal L-phenylalanyl-L-alpha-aminoacyl-[protein] + tRNA(Phe). Its function is as follows. Functions in the N-end rule pathway of protein degradation where it conjugates Leu, Phe and, less efficiently, Met from aminoacyl-tRNAs to the N-termini of proteins containing an N-terminal arginine or lysine. The polypeptide is Leucyl/phenylalanyl-tRNA--protein transferase (Herpetosiphon aurantiacus (strain ATCC 23779 / DSM 785 / 114-95)).